The following is a 298-amino-acid chain: UDP-N-acetylenolpyruvoylglucosamine reductase (298 aa).

Positions 27–191 (TGGEADVFVM…LDATFSLALE (165 aa)) constitute an FAD-binding PCMH-type domain. The active site involves Arg-170. Catalysis depends on Ser-220, which acts as the Proton donor. Residue Glu-290 is part of the active site.

This sequence belongs to the MurB family. It depends on FAD as a cofactor.

The protein localises to the cytoplasm. It carries out the reaction UDP-N-acetyl-alpha-D-muramate + NADP(+) = UDP-N-acetyl-3-O-(1-carboxyvinyl)-alpha-D-glucosamine + NADPH + H(+). The protein operates within cell wall biogenesis; peptidoglycan biosynthesis. Functionally, cell wall formation. The sequence is that of UDP-N-acetylenolpyruvoylglucosamine reductase from Listeria monocytogenes serotype 4a (strain HCC23).